A 197-amino-acid polypeptide reads, in one-letter code: Xanthine phosphoribosyltransferase (197 aa).

Residues Leu20 and Asn27 each coordinate xanthine. A 5-phospho-alpha-D-ribose 1-diphosphate-binding site is contributed by 128 to 132; that stretch reads ANGQA. Lys156 is a xanthine binding site.

Belongs to the purine/pyrimidine phosphoribosyltransferase family. Xpt subfamily. As to quaternary structure, homodimer.

It localises to the cytoplasm. The catalysed reaction is XMP + diphosphate = xanthine + 5-phospho-alpha-D-ribose 1-diphosphate. It participates in purine metabolism; XMP biosynthesis via salvage pathway; XMP from xanthine: step 1/1. In terms of biological role, converts the preformed base xanthine, a product of nucleic acid breakdown, to xanthosine 5'-monophosphate (XMP), so it can be reused for RNA or DNA synthesis. In Bacillus cereus (strain ATCC 14579 / DSM 31 / CCUG 7414 / JCM 2152 / NBRC 15305 / NCIMB 9373 / NCTC 2599 / NRRL B-3711), this protein is Xanthine phosphoribosyltransferase.